The sequence spans 640 residues: GATA zinc finger domain-containing protein 12 (640 aa).

Disordered stretches follow at residues 121–209 (SNNI…NIPI) and 355–390 (QQIRLQQQQSQQQHQQHQQHQQHQQPPTNIPQHINN). 2 stretches are compositionally biased toward low complexity: residues 122–209 (NNIP…NIPI) and 355–379 (QQIRLQQQQSQQQHQQHQQHQQHQQ). Positions 380–390 (PPTNIPQHINN) are enriched in polar residues. A GATA-type zinc finger spans residues 506-531 (CVNCKTSDTPEWRRGPQGAKTLCNAC).

This Dictyostelium discoideum (Social amoeba) protein is GATA zinc finger domain-containing protein 12 (gtaL).